The following is a 345-amino-acid chain: Phenylalanine--tRNA ligase alpha subunit (345 aa).

A Mg(2+)-binding site is contributed by Glu-272.

Belongs to the class-II aminoacyl-tRNA synthetase family. Phe-tRNA synthetase alpha subunit type 1 subfamily. Tetramer of two alpha and two beta subunits. Mg(2+) is required as a cofactor.

It localises to the cytoplasm. The enzyme catalyses tRNA(Phe) + L-phenylalanine + ATP = L-phenylalanyl-tRNA(Phe) + AMP + diphosphate + H(+). The polypeptide is Phenylalanine--tRNA ligase alpha subunit (Prochlorococcus marinus (strain MIT 9312)).